A 1171-amino-acid chain; its full sequence is Zinc finger BED domain-containing protein 4 (1171 aa).

A disordered region spans residues 25–62; sequence EEEDDDGIPPDSLERMDFKSEQEDMKQTDSGGERAGLG. Residues 36–51 show a composition bias toward basic and acidic residues; it reads SLERMDFKSEQEDMKQ. Lys-43 is covalently cross-linked (Glycyl lysine isopeptide (Lys-Gly) (interchain with G-Cter in SUMO2)). BED-type zinc fingers lie at residues 115–172 and 285–342; these read RKKS…LIQE and RRRS…VLQE. Residues Cys-136, Cys-139, His-160, His-165, Cys-306, Cys-309, His-330, and His-335 each coordinate Zn(2+). Residues 362–385 are compositionally biased toward low complexity; that stretch reads LLPPEGELSSVSSSPVKPVRESPS. Residues 362-405 are disordered; it reads LLPPEGELSSVSSSPVKPVRESPSASSSPDRLTEDLQSHLNPGD. 2 BED-type zinc fingers span residues 456–512 and 558–615; these read RLKS…VGSQ and KKTS…LKTE. Cys-477 and Cys-480 together coordinate Zn(2+). Lys-489 is covalently cross-linked (Glycyl lysine isopeptide (Lys-Gly) (interchain with G-Cter in SUMO2)). Zn(2+) is bound by residues His-500, His-505, Cys-579, Cys-582, His-603, and His-608. The segment at 614–640 is disordered; sequence TEVSETARPSSPDTRVPRGTELSGASS. Residue Ser-624 is modified to Phosphoserine. A required for homodimerization and nuclear accumulation region spans residues 1086-1171; sequence LAYLEEEVLE…VNLPLIYFQY (86 aa).

In terms of assembly, homodimer; via C-terminus. Interacts with MYH9. Interacts with SAFB/SAFB1. As to expression, expressed in testis, heart, lung, and weakly expressed in brain, liver, muscle, placenta and small intestine. Expressed in the retina, found in the cone photoreceptors, Mueller cells, cone pedicles and in the innermost retinal layer.

It is found in the nucleus. It localises to the cytoplasm. The protein localises to the photoreceptor inner segment. Transcriptional regulator that binds to poly-guanine tracts in gene promoters and activates transcription. Able to bind single- and double-stranded DNA and RNA. This is Zinc finger BED domain-containing protein 4 (ZBED4) from Homo sapiens (Human).